The primary structure comprises 567 residues: UPF0313 protein TM_0337 (567 aa).

A Radical SAM core domain is found at 288-560 (KAIETVKFSI…NKMKENVLFK (273 aa)). C303, C307, and C310 together coordinate [4Fe-4S] cluster.

It belongs to the UPF0313 family. Requires [4Fe-4S] cluster as cofactor.

In Thermotoga maritima (strain ATCC 43589 / DSM 3109 / JCM 10099 / NBRC 100826 / MSB8), this protein is UPF0313 protein TM_0337.